A 130-amino-acid chain; its full sequence is Small ribosomal subunit protein uS11c (130 aa).

This sequence belongs to the universal ribosomal protein uS11 family. Part of the 30S ribosomal subunit.

Its subcellular location is the plastid. The protein resides in the chloroplast. This is Small ribosomal subunit protein uS11c from Drimys granadensis.